The chain runs to 55 residues: Large ribosomal subunit protein bL33 (55 aa).

It belongs to the bacterial ribosomal protein bL33 family.

In Brucella abortus (strain S19), this protein is Large ribosomal subunit protein bL33.